The following is a 73-amino-acid chain: Tetrahydromethanopterin S-methyltransferase subunit F (73 aa).

A helical membrane pass occupies residues Ile52 to Phe72.

It belongs to the MtrF family. As to quaternary structure, the complex is composed of 8 subunits; MtrA, MtrB, MtrC, MtrD, MtrE, MtrF, MtrG and MtrH.

It localises to the cell membrane. The enzyme catalyses 5-methyl-5,6,7,8-tetrahydromethanopterin + coenzyme M + 2 Na(+)(in) = 5,6,7,8-tetrahydromethanopterin + methyl-coenzyme M + 2 Na(+)(out). It functions in the pathway one-carbon metabolism; methanogenesis from CO(2); methyl-coenzyme M from 5,10-methylene-5,6,7,8-tetrahydromethanopterin: step 2/2. Functionally, part of a complex that catalyzes the formation of methyl-coenzyme M and tetrahydromethanopterin from coenzyme M and methyl-tetrahydromethanopterin. This is an energy-conserving, sodium-ion translocating step. This Methanosarcina barkeri (strain Fusaro / DSM 804) protein is Tetrahydromethanopterin S-methyltransferase subunit F.